Reading from the N-terminus, the 140-residue chain is Large ribosomal subunit protein uL11 (140 aa).

It belongs to the universal ribosomal protein uL11 family. In terms of assembly, part of the ribosomal stalk of the 50S ribosomal subunit. Interacts with L10 and the large rRNA to form the base of the stalk. L10 forms an elongated spine to which L12 dimers bind in a sequential fashion forming a multimeric L10(L12)X complex. Post-translationally, one or more lysine residues are methylated.

Forms part of the ribosomal stalk which helps the ribosome interact with GTP-bound translation factors. This chain is Large ribosomal subunit protein uL11, found in Staphylococcus aureus (strain Mu3 / ATCC 700698).